The following is a 546-amino-acid chain: Zinc metalloproteinase nas-9 (546 aa).

Residues 1-14 (MIFLLFVVFPFVYA) form the signal peptide. The propeptide occupies 15 to 300 (QLLPELLAGF…GGGGGGRVPR (286 aa)). Residue Asn248 is glycosylated (N-linked (GlcNAc...) asparagine). One can recognise a Peptidase M12A domain in the interval 308–507 (SAVQKWDIWK…IRLLKKMYCR (200 aa)). Intrachain disulfides connect Cys347–Cys506, Cys372–Cys392, Cys510–Cys546, Cys517–Cys539, and Cys526–Cys543. A Zn(2+)-binding site is contributed by His401. Glu402 is an active-site residue. Positions 405 and 411 each coordinate Zn(2+). Positions 510 to 546 (CDDQNVHCGTWALHGYCKMKEQMKWMNENCKASCDKC) constitute a ShKT domain.

It depends on Zn(2+) as a cofactor. As to expression, expressed in hypodermis, uterus and spermatheca.

It is found in the secreted. In terms of biological role, metalloprotease. The polypeptide is Zinc metalloproteinase nas-9 (nas-9) (Caenorhabditis elegans).